The primary structure comprises 110 residues: Nucleotide-binding protein in fmt 3'region (110 aa).

8-15 contacts ATP; it reads GLSGAGKT. 57–60 provides a ligand contact to GTP; sequence DARA.

It belongs to the RapZ-like family.

Its function is as follows. Displays ATPase and GTPase activities. The sequence is that of Nucleotide-binding protein in fmt 3'region from Thermus thermophilus.